The following is a 226-amino-acid chain: Endonuclease V (226 aa).

Positions 43 and 111 each coordinate Mg(2+).

This sequence belongs to the endonuclease V family. Mg(2+) serves as cofactor.

It is found in the cytoplasm. The catalysed reaction is Endonucleolytic cleavage at apurinic or apyrimidinic sites to products with a 5'-phosphate.. DNA repair enzyme involved in the repair of deaminated bases. Selectively cleaves double-stranded DNA at the second phosphodiester bond 3' to a deoxyinosine leaving behind the intact lesion on the nicked DNA. This is Endonuclease V from Nocardia farcinica (strain IFM 10152).